Here is a 296-residue protein sequence, read N- to C-terminus: Ribonuclease HIII (296 aa).

The RNase H type-2 domain maps to 80 to 296 (LALIGSDEVG…NTKKAYQRLK (217 aa)). Asp86, Glu87, and Asp191 together coordinate a divalent metal cation.

Belongs to the RNase HII family. RnhC subfamily. Mn(2+) is required as a cofactor. The cofactor is Mg(2+).

The protein resides in the cytoplasm. The catalysed reaction is Endonucleolytic cleavage to 5'-phosphomonoester.. Its function is as follows. Endonuclease that specifically degrades the RNA of RNA-DNA hybrids. This chain is Ribonuclease HIII, found in Streptococcus thermophilus (strain CNRZ 1066).